Consider the following 199-residue polypeptide: MSDFQKSFSESTNSIKFDDKYRDNSVQPDDIGVANQWAVKTVADPCVGNLATPVNSGYFTKAFINNLPFYREGISPNFRGLETGAAFGYLLYGPFTMTGPLRNSDFAITAGLLAAIGAVHIMTALLVLYNAPGKAPNVQPPDATVNNPPADLFTRAGWADFTSGFWLGGCGGAVFAWLLVGTLHLDTIMPIIKNIWTAG.

A run of 2 helical transmembrane segments spans residues 108 to 128 (ITAG…LLVL) and 165 to 185 (FWLG…TLHL).

This sequence belongs to the PsaL family.

The protein localises to the cellular thylakoid membrane. This Prochlorococcus marinus (strain MIT 9515) protein is Photosystem I reaction center subunit XI.